A 259-amino-acid chain; its full sequence is Type III pantothenate kinase (259 aa).

6 to 13 (DVGNTNCT) provides a ligand contact to ATP. A substrate-binding site is contributed by 107–110 (GSDR). Asp109 serves as the catalytic Proton acceptor. Residue Asp129 participates in K(+) binding. Thr132 is an ATP binding site. A substrate-binding site is contributed by Thr184.

This sequence belongs to the type III pantothenate kinase family. Homodimer. NH4(+) serves as cofactor. It depends on K(+) as a cofactor.

Its subcellular location is the cytoplasm. The catalysed reaction is (R)-pantothenate + ATP = (R)-4'-phosphopantothenate + ADP + H(+). The protein operates within cofactor biosynthesis; coenzyme A biosynthesis; CoA from (R)-pantothenate: step 1/5. Functionally, catalyzes the phosphorylation of pantothenate (Pan), the first step in CoA biosynthesis. This is Type III pantothenate kinase from Listeria welshimeri serovar 6b (strain ATCC 35897 / DSM 20650 / CCUG 15529 / CIP 8149 / NCTC 11857 / SLCC 5334 / V8).